Consider the following 147-residue polypeptide: MVEWTDKERSIISDIFSHMDYDDIGPKALSRCLIVYPWTQRHFSGFGNLYNAEAIIGNANVAAHGIKVLHGLDRGVKNMDNIAATYADLSTLHSEKLHVDPDNFKLLSDCITIVLAAKMGHAFTAETQGAFQKFLAVVVSALGKQYH.

Residues 3–147 form the Globin domain; it reads EWTDKERSII…VVSALGKQYH (145 aa). The heme b site is built by histidine 64 and histidine 93.

Belongs to the globin family. As to quaternary structure, hb1 is a heterotetramer of two alpha chains and two beta chains. Red blood cells.

Its function is as follows. Involved in oxygen transport from gills to the various peripheral tissues. The chain is Hemoglobin subunit beta (hbb) from Trematomus bernacchii (Emerald rockcod).